The primary structure comprises 200 residues: uncharacterized protein (200 aa).

This is an uncharacterized protein from Saccharomyces cerevisiae (strain ATCC 204508 / S288c) (Baker's yeast).